We begin with the raw amino-acid sequence, 464 residues long: Glutamate--tRNA ligase (464 aa).

Residues 8–18 (PSPTGYMHLGN) carry the 'HIGH' region motif. Residues cysteine 96, cysteine 98, cysteine 123, and histidine 125 each coordinate Zn(2+). The short motif at 240–244 (KLSKR) is the 'KMSKS' region element. Lysine 243 provides a ligand contact to ATP.

It belongs to the class-I aminoacyl-tRNA synthetase family. Glutamate--tRNA ligase type 1 subfamily. In terms of assembly, monomer. Requires Zn(2+) as cofactor.

Its subcellular location is the cytoplasm. The enzyme catalyses tRNA(Glu) + L-glutamate + ATP = L-glutamyl-tRNA(Glu) + AMP + diphosphate. In terms of biological role, catalyzes the attachment of glutamate to tRNA(Glu) in a two-step reaction: glutamate is first activated by ATP to form Glu-AMP and then transferred to the acceptor end of tRNA(Glu). This Hydrogenobaculum sp. (strain Y04AAS1) protein is Glutamate--tRNA ligase.